A 94-amino-acid polypeptide reads, in one-letter code: PqqA binding protein (94 aa).

Belongs to the PqqD family. As to quaternary structure, monomer. Interacts with PqqE.

It functions in the pathway cofactor biosynthesis; pyrroloquinoline quinone biosynthesis. Functions as a PqqA binding protein and presents PqqA to PqqE, in the pyrroloquinoline quinone (PQQ) biosynthetic pathway. The chain is PqqA binding protein from Acinetobacter baumannii (strain SDF).